A 294-amino-acid chain; its full sequence is NADH-cytochrome b5 reductase 2 (294 aa).

A helical transmembrane segment spans residues 11–27 (VLLPVVAAATSIGLVYH). The 105-residue stretch at 45-149 (DEWIDLKLKK…KGPIVKWKWE (105 aa)) folds into the FAD-binding FR-type domain. Position 152–187 (152–187 (QFQSIALIGGGTGITPLYQLLHEITKNPEDKTKVKL)) interacts with FAD.

This sequence belongs to the flavoprotein pyridine nucleotide cytochrome reductase family. Requires FAD as cofactor.

It localises to the mitochondrion outer membrane. The catalysed reaction is 2 Fe(III)-[cytochrome b5] + NADH = 2 Fe(II)-[cytochrome b5] + NAD(+) + H(+). Its function is as follows. May mediate the reduction of outer membrane cytochrome b5. This Meyerozyma guilliermondii (strain ATCC 6260 / CBS 566 / DSM 6381 / JCM 1539 / NBRC 10279 / NRRL Y-324) (Yeast) protein is NADH-cytochrome b5 reductase 2 (MCR1).